The chain runs to 593 residues: Scarecrow-like protein 1 (593 aa).

Disordered regions lie at residues 29 to 61 and 188 to 216; these read NPKLYTLNENGNNNGVSSAQIFDPDRSKNPCLT and YQNESEQHQDSPKESSSADSNSHVSSKEV. Polar residues predominate over residues 35–48; the sequence is LNENGNNNGVSSAQ. The span at 202–211 shows a compositional bias: low complexity; that stretch reads SSSADSNSHV. The GRAS domain occupies 213 to 593; that stretch reads SKEVVSQATP…KSLIVASAWR (381 aa). The segment at 220 to 280 is leucine repeat I (LRI); that stretch reads ATPKQILISC…AARMAASGKF (61 aa). Residues 299–364 are VHIID; it reads MQVLFEVCPC…GKRPRLRLTG (66 aa). The short motif at 330–334 is the VHIID element; the sequence is VHIID. The interval 380-411 is leucine repeat II (LRII); it reads IIGLRLEQLAEDNGVSFKFKAMPSKTSIVSPS. The interval 421 to 515 is PFYRE; it reads LIVNFAFQLH…RQCLARDIVN (95 aa). The segment at 518–593 is SAW; that stretch reads ACEGEERIER…KSLIVASAWR (76 aa).

It belongs to the GRAS family. As to expression, expressed in seedlings, roots, shoots, leaves, flowers and siliques.

The protein resides in the nucleus. Functionally, probable transcription factor involved in plant development. This Arabidopsis thaliana (Mouse-ear cress) protein is Scarecrow-like protein 1 (SCL1).